We begin with the raw amino-acid sequence, 286 residues long: MVAVIIKGNEVAEKKRAQLTEEVVKLKEQGIVPGLAVILVGEDPASRSYVKGKEKGCEQVGIYSELIEFPETITEERLLAEIDRLNGDDRINGILVQLPLPKHIEEKAIIERISPEKDVDGFHPISVGRMMTGQDTFLPCTPHGIVELVKETNLDISGKHVVVIGRSNIVGKPVGQLFLNENATVTYCHSKTQNMKELTKLADILIVAVGRPKMVTADYIKEGAVVIDVGVNRLETGKLCGDVDFDNVLDVAGYITPVPKGVGPMTITMLLHNTVESAKRAGVVCK.

NADP(+)-binding positions include 165-167 (GRS), Ser190, and Val231.

The protein belongs to the tetrahydrofolate dehydrogenase/cyclohydrolase family. As to quaternary structure, homodimer.

It carries out the reaction (6R)-5,10-methylene-5,6,7,8-tetrahydrofolate + NADP(+) = (6R)-5,10-methenyltetrahydrofolate + NADPH. The enzyme catalyses (6R)-5,10-methenyltetrahydrofolate + H2O = (6R)-10-formyltetrahydrofolate + H(+). It participates in one-carbon metabolism; tetrahydrofolate interconversion. Functionally, catalyzes the oxidation of 5,10-methylenetetrahydrofolate to 5,10-methenyltetrahydrofolate and then the hydrolysis of 5,10-methenyltetrahydrofolate to 10-formyltetrahydrofolate. The protein is Bifunctional protein FolD of Bacillus cereus (strain AH187).